Consider the following 297-residue polypeptide: N-acetylmuramic acid 6-phosphate etherase (297 aa).

An SIS domain is found at 55–218 (AAAALKSGGR…STGAMVKFGK (164 aa)). Glu-83 (proton donor) is an active-site residue. Glu-114 is a catalytic residue.

The protein belongs to the GCKR-like family. MurNAc-6-P etherase subfamily. As to quaternary structure, homodimer.

The catalysed reaction is N-acetyl-D-muramate 6-phosphate + H2O = N-acetyl-D-glucosamine 6-phosphate + (R)-lactate. It functions in the pathway amino-sugar metabolism; 1,6-anhydro-N-acetylmuramate degradation. Its pathway is amino-sugar metabolism; N-acetylmuramate degradation. It participates in cell wall biogenesis; peptidoglycan recycling. Specifically catalyzes the cleavage of the D-lactyl ether substituent of MurNAc 6-phosphate, producing GlcNAc 6-phosphate and D-lactate. Together with AnmK, is also required for the utilization of anhydro-N-acetylmuramic acid (anhMurNAc) either imported from the medium or derived from its own cell wall murein, and thus plays a role in cell wall recycling. This chain is N-acetylmuramic acid 6-phosphate etherase, found in Salmonella choleraesuis (strain SC-B67).